The chain runs to 395 residues: MGIKHLYQIIQENAPDAVKAGEIKNHFGRKVAIDASMSIYSFLIAVRSDGQQLTSETGETTSHLMGMFYRTLRIVDNGIKPVYVFDGAPPKLKSGELAKRFMRKSEAAEAHEEAKEVGTAEEVEKFSRRTVRVTREHNEECKKLLKLMGVPYIDAPTEAEAQCAVLARAGKVYAAASEDMDTLCFDSPILLRHLTFSEQRKEPILEIHLDRVLEGLDMDRKQFVDLCILLGCDYLDPIPKVGPNTALKLIRDHGSLEQVVEAIKSDPKKKYTIPEDWPYKEARELFFDPDVRNADHPDCDFKWEAPDVEGLVKFLVEEKAFSEDRVRNAAARLQKNLKTAQQSRLEGFFKPIAKTEQEKAVLKRKHEEKLELQKKKKKEDSKAKKEAKSKPRGTT.

The tract at residues 1–104 (MGIKHLYQII…GELAKRFMRK (104 aa)) is N-domain. Aspartate 34 contributes to the Mg(2+) binding site. 2 residues coordinate DNA: arginine 47 and arginine 70. 5 residues coordinate Mg(2+): aspartate 86, glutamate 158, glutamate 160, aspartate 179, and aspartate 181. The segment at 122–253 (EVEKFSRRTV…NTALKLIRDH (132 aa)) is I-domain. Glutamate 158 provides a ligand contact to DNA. DNA contacts are provided by glycine 231 and aspartate 233. Aspartate 233 lines the Mg(2+) pocket. The segment at 341 to 349 (QQSRLEGFF) is interaction with PCNA. Residues 360-389 (AVLKRKHEEKLELQKKKKKEDSKAKKEAKS) show a composition bias toward basic and acidic residues. The disordered stretch occupies residues 360 to 395 (AVLKRKHEEKLELQKKKKKEDSKAKKEAKSKPRGTT).

This sequence belongs to the XPG/RAD2 endonuclease family. FEN1 subfamily. As to quaternary structure, interacts with PCNA. Three molecules of FEN1 bind to one PCNA trimer with each molecule binding to one PCNA monomer. PCNA stimulates the nuclease activity without altering cleavage specificity. Requires Mg(2+) as cofactor. Phosphorylated. Phosphorylation upon DNA damage induces relocalization to the nuclear plasma.

It localises to the nucleus. Its subcellular location is the nucleolus. The protein localises to the nucleoplasm. It is found in the mitochondrion. Its function is as follows. Structure-specific nuclease with 5'-flap endonuclease and 5'-3' exonuclease activities involved in DNA replication and repair. During DNA replication, cleaves the 5'-overhanging flap structure that is generated by displacement synthesis when DNA polymerase encounters the 5'-end of a downstream Okazaki fragment. It enters the flap from the 5'-end and then tracks to cleave the flap base, leaving a nick for ligation. Also involved in the long patch base excision repair (LP-BER) pathway, by cleaving within the apurinic/apyrimidinic (AP) site-terminated flap. Acts as a genome stabilization factor that prevents flaps from equilibrating into structures that lead to duplications and deletions. Also possesses 5'-3' exonuclease activity on nicked or gapped double-stranded DNA, and exhibits RNase H activity. Also involved in replication and repair of rDNA and in repairing mitochondrial DNA. The protein is Flap endonuclease 1 of Ajellomyces capsulatus (strain H143) (Darling's disease fungus).